The following is an 832-amino-acid chain: Translation initiation factor IF-2 (832 aa).

Residues 1–249 (MSDDNDKPRT…GGGSSAPREK (249 aa)) are disordered. Residues 53 to 71 (TPAPAPEPAPEPAPAPAPA) show a composition bias toward pro residues. Residues 89-144 (PQERVARLQREAEEERLKLAEDARKRDDQKAKQNADDEKKRQEENKKAEEEAEKQA) show a composition bias toward basic and acidic residues. The span at 145-156 (AAEAEAAAAAEA) shows a compositional bias: low complexity. The segment covering 180-200 (PEPKRPEKKKEEKKPARGGAK) has biased composition (basic and acidic residues). Residues 333–503 (PRPPVVTIMG…ELQAELLELK (171 aa)) enclose the tr-type G domain. A G1 region spans residues 342–349 (GHVDHGKT). A GTP-binding site is contributed by 342 to 349 (GHVDHGKT). Positions 367-371 (GITQH) are G2. A G3 region spans residues 389-392 (DTPG). Residues 389–393 (DTPGH) and 443–446 (NKCD) each bind GTP. The segment at 443–446 (NKCD) is G4. The G5 stretch occupies residues 479 to 481 (SAT).

Belongs to the TRAFAC class translation factor GTPase superfamily. Classic translation factor GTPase family. IF-2 subfamily.

It is found in the cytoplasm. Functionally, one of the essential components for the initiation of protein synthesis. Protects formylmethionyl-tRNA from spontaneous hydrolysis and promotes its binding to the 30S ribosomal subunits. Also involved in the hydrolysis of GTP during the formation of the 70S ribosomal complex. The polypeptide is Translation initiation factor IF-2 (Erythrobacter litoralis (strain HTCC2594)).